The sequence spans 173 residues: Ferritin, lower subunit (173 aa).

The Ferritin-like diiron domain maps to 7-156 (QNFHQDCEAG…DHITSLKKLW (150 aa)). Residues Glu-59 and His-62 each contribute to the Fe cation site.

This sequence belongs to the ferritin family. Oligomer of 24 subunits. The functional molecule is roughly spherical and contains a central cavity into which the polymeric mineral iron core is deposited.

Stores iron in a soluble, non-toxic, readily available form. Important for iron homeostasis. Iron is taken up in the ferrous form and deposited as ferric hydroxides after oxidation. The chain is Ferritin, lower subunit from Aquarana catesbeiana (American bullfrog).